A 2410-amino-acid chain; its full sequence is Coprinoferrin synthetase (2410 aa).

Positions 237–646 (LERRAKTNPH…GRIDTQIKVR (410 aa)) are adenylation 1. The 78-residue stretch at 783-860 (RDCTPLEAEV…DIAQLVHVST (78 aa)) folds into the Carrier 1 domain. Position 820 is an O-(pantetheine 4'-phosphoryl)serine (Ser-820). The condensation 1 stretch occupies residues 891-1260 (DILPPFPVQE…SVEAVVNVHD (370 aa)). A disordered region spans residues 1298–1317 (ELPLPSRRSPEPVRKVNDDE). Positions 1305 to 1314 (RSPEPVRKVN) are enriched in basic and acidic residues. Residues 1324–1400 (LLDPVVVADL…RLARVVSNNK (77 aa)) enclose the Carrier 2 domain. Ser-1361 is subject to O-(pantetheine 4'-phosphoryl)serine. Residues 1436–1839 (IIPSTALQSG…RIGRTFSVPS (404 aa)) are condensation 2. Positions 1858-1932 (VQAGIIHPVL…DLVLQATEIK (75 aa)) constitute a Carrier 3 domain. An O-(pantetheine 4'-phosphoryl)serine modification is found at Ser-1893. The segment at 1992-2315 (FQYLFTFKLP…TPIFNVNVNV (324 aa)) is condensation 3.

The protein belongs to the NRP synthetase family.

It functions in the pathway siderophore biosynthesis. In terms of biological role, nonribosomal peptide synthase; part of the gene cluster that mediates the biosynthesis of coprinoferrin, an acylated tripeptide hydroxamate siderophore. The biosynthesis of coprinoferrin depends on the hydroxylation of ornithine to N(5)-hydroxyornithine, catalyzed by the monooxygenase cpf2. The second step, the acylation of N(5)-hydroxy-L-ornithine to yield N(5)-hexanoyl-N(5)-hydroxyl-L-ornithine is catalyzed by a not yet identified acyltransferase. Finally, assembly of coprinoferrin is catalyzed by the nonribosomal peptide synthase (NRPS) cpf1 via amide bond formation between three N(5)-hexanoyl-N(5)-hydroxyl-L-ornithine molecules to release the linear trimer. Interestingly, proteins seemingly not directly related to biosynthesis, such as transcription factors, replication factors, and autophagy-related proteins, are conserved among the clusters homologous to the coprinoferrin cluster, suggesting that the cluster may also play developmental and cell biological functions. The protein is Coprinoferrin synthetase of Coprinopsis cinerea (strain Okayama-7 / 130 / ATCC MYA-4618 / FGSC 9003) (Inky cap fungus).